A 305-amino-acid chain; its full sequence is Sulfate adenylyltransferase subunit 2 (305 aa).

The protein belongs to the PAPS reductase family. CysD subfamily. As to quaternary structure, heterodimer composed of CysD, the smaller subunit, and CysN.

It catalyses the reaction sulfate + ATP + H(+) = adenosine 5'-phosphosulfate + diphosphate. It participates in sulfur metabolism; hydrogen sulfide biosynthesis; sulfite from sulfate: step 1/3. Its function is as follows. With CysN forms the ATP sulfurylase (ATPS) that catalyzes the adenylation of sulfate producing adenosine 5'-phosphosulfate (APS) and diphosphate, the first enzymatic step in sulfur assimilation pathway. APS synthesis involves the formation of a high-energy phosphoric-sulfuric acid anhydride bond driven by GTP hydrolysis by CysN coupled to ATP hydrolysis by CysD. In Pseudomonas aeruginosa (strain LESB58), this protein is Sulfate adenylyltransferase subunit 2.